The following is a 704-amino-acid chain: Polyribonucleotide nucleotidyltransferase (704 aa).

Residues Asp-485 and Asp-491 each contribute to the Mg(2+) site. One can recognise a KH domain in the interval 552 to 611 (PRIYTMKIDPKKIKDVIGKGGATIRALTEETGTSIDIDDDGTVKIAAVDGNAVKTVMARI). One can recognise an S1 motif domain in the interval 621-689 (GAVYTGKVTR…RQGRIRLTMR (69 aa)).

It belongs to the polyribonucleotide nucleotidyltransferase family. In terms of assembly, component of the RNA degradosome, which is a multiprotein complex involved in RNA processing and mRNA degradation. It depends on Mg(2+) as a cofactor.

Its subcellular location is the cytoplasm. The enzyme catalyses RNA(n+1) + phosphate = RNA(n) + a ribonucleoside 5'-diphosphate. Its function is as follows. Involved in mRNA degradation. Catalyzes the phosphorolysis of single-stranded polyribonucleotides processively in the 3'- to 5'-direction. This chain is Polyribonucleotide nucleotidyltransferase, found in Mannheimia succiniciproducens (strain KCTC 0769BP / MBEL55E).